Consider the following 398-residue polypeptide: Streptopain (398 aa).

A signal peptide spans 1–27; the sequence is MNKKKLGIRLLSLLALGGFVLANPVFA. Positions 28-145 are excised as a propeptide; sequence DQNFARNEKE…TTYAGTAEIK (118 aa). Residue cysteine 192 is the Nucleophile of the active site. Cysteine 192 carries the post-translational modification Cysteine methyl disulfide; in zymogen form. Serine 282 and glycine 339 together coordinate a protein. Histidine 340 (proton acceptor) is an active-site residue. Residues 368–390 are C-terminal active site loop; the sequence is RLDALNPSALGTGGGAGGFNGYQ.

Belongs to the peptidase C10 family. Monomer. The mature protease is derived from the precursor sequence by cleavage, either in cis via an autocatalytic mechanism, or in trans by mature SpeB or host proteases (trypsin, plasmin or subtilisin). Maturation can involve a number of protein cleavage intermediates. Mature SpeB probably plays the most important role in protein maturation in physiological conditions. Post-translationally, methylthiolation at Cys-192 of the inactive zymogen form is probably involved in the mechanism of secretion of the proteinase into the culture fluid.

The protein localises to the secreted. Its subcellular location is the host extracellular space. It is found in the host cytoplasm. The catalysed reaction is Preferential cleavage with hydrophobic residues at P2, P1 and P1'.. Its activity is regulated as follows. Synthesized as an inactive zymogen to protect the intracellular components of the bacteria from proteolytic activity during protein production. Once secreted into the extracellular milieu, cleaved into the active protease: maturation can be mediated in cis by autocatalytic cleavage, or in trans by mature SpeB or host proteases. Protease activity is strongly inhibited by zinc and copper, which prevent its maturation into an active protease: inhibition by metal ions may be required to prevent proteolysis of streptococcal proteins. Its function is as follows. Cysteine protease that acts as a key streptococcal virulence factor by cleaving host proteins involved in immune response. Triggers inflammation by mediating cleavage of host proteins, which can both promote host pathogenesis by triggering sterile inflammation and/or restrict streptococcal infection, depending on host immune statue and infection site. Cleaves host gasdermin-A (GSDMA) in epithelial cells, promoting GSDMA activation and formation of gasdermin pores, triggering pyroptosis. Pyroptosis triggers the elimination of the infected skin cell, depriving the pathogen of its protective niche, while inducing an inflammatory response. This ultimately prevents bacterial penetration of the epithelial barrier and a subsequent systemic dissemination of the pathogen. Also mediates cleavage of the cytokine precursor interleukin-1 beta (IL1B) to its mature form, resulting in inflammation and septic shock. SpeB-mediated maturation of IL1B plays a dual role depending on infection site: while IL1B inflammatory response prevents bacterial growth during invasive skin infections, it promotes streptococcal infection of the nasopharynx by disrupting colonization resistance mediated by the microbiota. Inhibits host autophagy be catalyzing cleavage and inactivation of key autophagy factors, such as CALCOCO2, NBR1 and SQSTM1. Cleaves and inhibits a number of complement factors, such as C2, C3-beta chain of C3, C4, C5 or SERPING1, thereby promoting evasion of host immunity. May also impair adaptive immunity by catalyzing cleavage and degradation of host immunoglobulins to promote immune system evasion; the relevance of this activity is however unsure in vivo. Catalyzes maturation and release of the peptide hormone bradykinin from the precursor Kininogen-1 (KNG1) to produce hypotension during septic shock. Also involved in bacterial translocation across the host epithelial barrier by mediating cleavage and degradation of host epithelial junction proteins, such as CDH1 and OCLN. Additionally, has been involved in degradation of fibronectin and vitronectin, two host extracellular matrix proteins involved in tissue integrity. Also able to catalyze cleavage and degradation of streptococcal proteins, such as C5a peptidase, EndoS or SmeZ. Degradation of streptococcal proteins is however strictly regulated to preserve integrity of other virulence factors. This Streptococcus pyogenes serotype M28 (strain MGAS6180) protein is Streptopain (speB).